A 61-amino-acid polypeptide reads, in one-letter code: Tryptophyllin-T1 (61 aa).

The signal sequence occupies residues Met-1–Cys-22. A propeptide spanning residues Asp-23–Asp-53 is cleaved from the precursor. Residues Glu-25 to Lys-61 form a disordered region. The span at Arg-36–Pro-55 shows a compositional bias: basic and acidic residues. Pro-56 carries the post-translational modification 4-hydroxyproline; partial.

It belongs to the frog skin active peptide (FSAP) family. Tryptophillin subfamily. Expressed by the skin glands.

The protein resides in the secreted. The polypeptide is Tryptophyllin-T1 (Pithecopus azureus (Orange-legged monkey tree frog)).